A 208-amino-acid chain; its full sequence is V-type ATP synthase subunit D (208 aa).

This sequence belongs to the V-ATPase D subunit family.

In terms of biological role, produces ATP from ADP in the presence of a proton gradient across the membrane. This Streptococcus pyogenes serotype M6 (strain ATCC BAA-946 / MGAS10394) protein is V-type ATP synthase subunit D.